A 122-amino-acid polypeptide reads, in one-letter code: Small ribosomal subunit protein uS13 (122 aa).

Positions 95–122 (GLPVRGQRTHTNARTRKGPAKSIAGKKK) are disordered.

This sequence belongs to the universal ribosomal protein uS13 family. As to quaternary structure, part of the 30S ribosomal subunit. Forms a loose heterodimer with protein S19. Forms two bridges to the 50S subunit in the 70S ribosome.

Its function is as follows. Located at the top of the head of the 30S subunit, it contacts several helices of the 16S rRNA. In the 70S ribosome it contacts the 23S rRNA (bridge B1a) and protein L5 of the 50S subunit (bridge B1b), connecting the 2 subunits; these bridges are implicated in subunit movement. Contacts the tRNAs in the A and P-sites. The polypeptide is Small ribosomal subunit protein uS13 (Nitrobacter winogradskyi (strain ATCC 25391 / DSM 10237 / CIP 104748 / NCIMB 11846 / Nb-255)).